We begin with the raw amino-acid sequence, 838 residues long: Multiphosphoryl transfer protein (838 aa).

One can recognise a PTS EIIA type-2 domain in the interval 7 to 147; sequence APVTPDLVRL…AVIVAALTGD (141 aa). Residue histidine 67 is the Tele-phosphohistidine intermediate; for EIIA activity of the active site. A Phosphohistidine; by HPr modification is found at histidine 67. Residues 161–253 enclose the HPr domain; that stretch reads AERFEWTIAY…LTAQEKADAE (93 aa). Catalysis depends on histidine 175, which acts as the Pros-phosphohistidine intermediate; for HPr activity. Histidine 175 bears the Phosphohistidine; by EI mark. The segment at 274–838 is PTS EI; it reads AIVGIGASPG…ALEAQREGQA (565 aa). Histidine 460 functions as the Tele-phosphohistidine intermediate; for PTS EI activity in the catalytic mechanism. Phosphohistidine; by autocatalysis is present on histidine 460. Arginine 567 and arginine 603 together coordinate phosphoenolpyruvate. Mg(2+) is bound by residues glutamate 697 and aspartate 721. Phosphoenolpyruvate-binding positions include 720-721 and arginine 731; that span reads ND. Cysteine 768 (proton donor) is an active-site residue.

Belongs to the PEP-utilizing enzyme family. Mg(2+) serves as cofactor.

It localises to the cytoplasm. It catalyses the reaction L-histidyl-[protein] + phosphoenolpyruvate = N(pros)-phospho-L-histidyl-[protein] + pyruvate. Its function is as follows. The phosphoenolpyruvate-dependent sugar phosphotransferase system (sugar PTS), a major carbohydrate active transport system, catalyzes the phosphorylation of incoming sugar substrates concomitantly with their translocation across the cell membrane. The enzyme II FruAB PTS system is involved in fructose transport. This chain is Multiphosphoryl transfer protein, found in Xanthomonas campestris pv. campestris (strain ATCC 33913 / DSM 3586 / NCPPB 528 / LMG 568 / P 25).